Here is a 513-residue protein sequence, read N- to C-terminus: Glycogen synthase (513 aa).

Residue K47 coordinates ADP-alpha-D-glucose.

Belongs to the glycosyltransferase 1 family. Bacterial/plant glycogen synthase subfamily.

It catalyses the reaction [(1-&gt;4)-alpha-D-glucosyl](n) + ADP-alpha-D-glucose = [(1-&gt;4)-alpha-D-glucosyl](n+1) + ADP + H(+). The protein operates within glycan biosynthesis; glycogen biosynthesis. Functionally, synthesizes alpha-1,4-glucan chains using ADP-glucose. This is Glycogen synthase from Pseudomonas aeruginosa (strain ATCC 15692 / DSM 22644 / CIP 104116 / JCM 14847 / LMG 12228 / 1C / PRS 101 / PAO1).